A 149-amino-acid polypeptide reads, in one-letter code: Flagellar basal-body protein FlbY (149 aa).

In terms of assembly, the basal body constitutes a major portion of the flagellar organelle and consists of five rings (E,L,P,S, and M) mounted on a central rod.

The protein localises to the bacterial flagellum basal body. This is Flagellar basal-body protein FlbY (flbY) from Caulobacter vibrioides (strain ATCC 19089 / CIP 103742 / CB 15) (Caulobacter crescentus).